The primary structure comprises 414 residues: Glutamyl-tRNA reductase (414 aa).

Substrate contacts are provided by residues threonine 51–arginine 54, serine 107, glutamate 112–glutamate 114, and glutamine 118. Cysteine 52 (nucleophile) is an active-site residue. An NADP(+)-binding site is contributed by glycine 187–glycine 192.

This sequence belongs to the glutamyl-tRNA reductase family. In terms of assembly, homodimer.

The enzyme catalyses (S)-4-amino-5-oxopentanoate + tRNA(Glu) + NADP(+) = L-glutamyl-tRNA(Glu) + NADPH + H(+). Its pathway is porphyrin-containing compound metabolism; protoporphyrin-IX biosynthesis; 5-aminolevulinate from L-glutamyl-tRNA(Glu): step 1/2. In terms of biological role, catalyzes the NADPH-dependent reduction of glutamyl-tRNA(Glu) to glutamate 1-semialdehyde (GSA). This Sulfolobus acidocaldarius (strain ATCC 33909 / DSM 639 / JCM 8929 / NBRC 15157 / NCIMB 11770) protein is Glutamyl-tRNA reductase.